The primary structure comprises 508 residues: Proto-oncogene tyrosine-protein kinase LCK (508 aa).

Residue glycine 2 is the site of N-myristoyl glycine attachment. 2 S-palmitoyl cysteine lipidation sites follow: cysteine 3 and cysteine 5. Positions leucine 60–serine 120 constitute an SH3 domain. Positions tryptophan 126 to cysteine 223 constitute an SH2 domain. Positions leucine 244–phenylalanine 497 constitute a Protein kinase domain. Residues leucine 250–valine 258 and lysine 272 contribute to the ATP site. Aspartate 363 functions as the Proton acceptor in the catalytic mechanism. Phosphotyrosine; by autocatalysis is present on tyrosine 393. Position 504 is a phosphotyrosine (tyrosine 504).

This sequence belongs to the protein kinase superfamily. Tyr protein kinase family. SRC subfamily. Binds to the cytoplasmic domain of cell surface receptors, such as CD4, CD8. Post-translationally, phosphorylated on Tyr-393, which increases enzymatic activity, this site is dephosphorylated by PTN22. Phosphorylated on Tyr-504, presumably by CSK, which decreases activity. Dephosphorylated by PTPRC/CD45. Dephosphorylation at Tyr-393 by PTPN2 negatively regulates T-cells differentiation. Palmitoylation regulates association with the plasma membrane.

The protein resides in the cell membrane. It is found in the cytoplasm. Its subcellular location is the cytosol. The enzyme catalyses L-tyrosyl-[protein] + ATP = O-phospho-L-tyrosyl-[protein] + ADP + H(+). With respect to regulation, inhibited by tyrosine phosphorylation. Its function is as follows. Tyrosine kinase that plays an essential role for the selection and maturation of developing T-cell in the thymus and in mature T-cell function. Is constitutively associated with the cytoplasmic portions of the CD4 and CD8 surface receptors and plays a key role in T-cell antigen receptor(TCR)-linked signal transduction pathways. In Gallus gallus (Chicken), this protein is Proto-oncogene tyrosine-protein kinase LCK (LCK).